Reading from the N-terminus, the 320-residue chain is Lipoyl synthase (320 aa).

[4Fe-4S] cluster contacts are provided by C67, C72, C78, C93, C97, C100, and S307. The Radical SAM core domain maps to 79 to 296 (FNHGTATFMI…REKANEMGFE (218 aa)).

The protein belongs to the radical SAM superfamily. Lipoyl synthase family. [4Fe-4S] cluster is required as a cofactor.

The protein localises to the cytoplasm. It catalyses the reaction [[Fe-S] cluster scaffold protein carrying a second [4Fe-4S](2+) cluster] + N(6)-octanoyl-L-lysyl-[protein] + 2 oxidized [2Fe-2S]-[ferredoxin] + 2 S-adenosyl-L-methionine + 4 H(+) = [[Fe-S] cluster scaffold protein] + N(6)-[(R)-dihydrolipoyl]-L-lysyl-[protein] + 4 Fe(3+) + 2 hydrogen sulfide + 2 5'-deoxyadenosine + 2 L-methionine + 2 reduced [2Fe-2S]-[ferredoxin]. Its pathway is protein modification; protein lipoylation via endogenous pathway; protein N(6)-(lipoyl)lysine from octanoyl-[acyl-carrier-protein]: step 2/2. Catalyzes the radical-mediated insertion of two sulfur atoms into the C-6 and C-8 positions of the octanoyl moiety bound to the lipoyl domains of lipoate-dependent enzymes, thereby converting the octanoylated domains into lipoylated derivatives. The polypeptide is Lipoyl synthase (Glaesserella parasuis serovar 5 (strain SH0165) (Haemophilus parasuis)).